The following is an 84-amino-acid chain: Large ribosomal subunit protein bL27 (84 aa).

The interval 1–21 (MAHKKAGGSTRNGRDSNPKYL) is disordered.

Belongs to the bacterial ribosomal protein bL27 family.

The protein is Large ribosomal subunit protein bL27 of Francisella tularensis subsp. holarctica (strain FTNF002-00 / FTA).